An 82-amino-acid chain; its full sequence is Small ribosomal subunit protein bS16 (82 aa).

This sequence belongs to the bacterial ribosomal protein bS16 family.

The polypeptide is Small ribosomal subunit protein bS16 (Salmonella agona (strain SL483)).